The chain runs to 314 residues: ATP synthase gamma chain (314 aa).

The protein belongs to the ATPase gamma chain family. F-type ATPases have 2 components, CF(1) - the catalytic core - and CF(0) - the membrane proton channel. CF(1) has five subunits: alpha(3), beta(3), gamma(1), delta(1), epsilon(1). CF(0) has three main subunits: a, b and c.

The protein resides in the cellular thylakoid membrane. Produces ATP from ADP in the presence of a proton gradient across the membrane. The gamma chain is believed to be important in regulating ATPase activity and the flow of protons through the CF(0) complex. This is ATP synthase gamma chain from Rippkaea orientalis (strain PCC 8801 / RF-1) (Cyanothece sp. (strain PCC 8801)).